Reading from the N-terminus, the 427-residue chain is Glutamate-1-semialdehyde 2,1-aminomutase 2 (427 aa).

Residue Lys267 is modified to N6-(pyridoxal phosphate)lysine.

It belongs to the class-III pyridoxal-phosphate-dependent aminotransferase family. HemL subfamily. As to quaternary structure, homodimer. The cofactor is pyridoxal 5'-phosphate.

Its subcellular location is the cytoplasm. The enzyme catalyses (S)-4-amino-5-oxopentanoate = 5-aminolevulinate. It functions in the pathway porphyrin-containing compound metabolism; protoporphyrin-IX biosynthesis; 5-aminolevulinate from L-glutamyl-tRNA(Glu): step 2/2. The chain is Glutamate-1-semialdehyde 2,1-aminomutase 2 from Staphylococcus haemolyticus (strain JCSC1435).